Consider the following 29-residue polypeptide: Neurotoxin BmK A3-6 (29 aa).

Post-translationally, contains 3 disulfide bonds. As to expression, expressed by the venom gland.

It localises to the secreted. The protein is Neurotoxin BmK A3-6 of Olivierus martensii (Manchurian scorpion).